The primary structure comprises 151 residues: Ribonuclease P protein component (151 aa).

The disordered stretch occupies residues 1–62 (MDEKDLATQP…LKGDSAFRRL (62 aa)). Over residues 28–48 (GAQGAEAQAAEGPLAAHAQGA) the composition is skewed to low complexity.

It belongs to the RnpA family. In terms of assembly, consists of a catalytic RNA component (M1 or rnpB) and a protein subunit.

The enzyme catalyses Endonucleolytic cleavage of RNA, removing 5'-extranucleotides from tRNA precursor.. Its function is as follows. RNaseP catalyzes the removal of the 5'-leader sequence from pre-tRNA to produce the mature 5'-terminus. It can also cleave other RNA substrates such as 4.5S RNA. The protein component plays an auxiliary but essential role in vivo by binding to the 5'-leader sequence and broadening the substrate specificity of the ribozyme. This chain is Ribonuclease P protein component, found in Thermus oshimai.